A 579-amino-acid chain; its full sequence is Proteasome-associated ATPase (579 aa).

The interval 1–21 (MPRDETPEREHAEQQSRQALE) is disordered. Residues 8–86 (EREHAEQQSR…REEVEKLTQP (79 aa)) are a coiled coil. 268 to 273 (GCGKTL) contacts ATP. Residues 578–579 (YL) form a docks into pockets in the proteasome alpha-ring region.

This sequence belongs to the AAA ATPase family. In terms of assembly, homohexamer. Assembles into a hexameric ring structure that caps the 20S proteasome core. Strongly interacts with the prokaryotic ubiquitin-like protein Pup through a hydrophobic interface; the interacting region of ARC lies in its N-terminal coiled-coil domain. There is one Pup binding site per ARC hexamer ring. Upon ATP-binding, the C-terminus of ARC interacts with the alpha-rings of the proteasome core, possibly by binding to the intersubunit pockets.

Its pathway is protein degradation; proteasomal Pup-dependent pathway. ATPase which is responsible for recognizing, binding, unfolding and translocation of pupylated proteins into the bacterial 20S proteasome core particle. May be essential for opening the gate of the 20S proteasome via an interaction with its C-terminus, thereby allowing substrate entry and access to the site of proteolysis. Thus, the C-termini of the proteasomal ATPase may function like a 'key in a lock' to induce gate opening and therefore regulate proteolysis. This Acidimicrobium ferrooxidans (strain DSM 10331 / JCM 15462 / NBRC 103882 / ICP) protein is Proteasome-associated ATPase.